The primary structure comprises 972 residues: MMSNLKLGVEVISARLKPREDYGGVNAYVELRFDDQKVITMTKIDDSSPVWNEKFFFNISDTEDLSNQFLDAYVYNKTSSITKSCLGKIRILGTAFLPYSEAVGLPYPLEKEKWSMFSSAAANGGELALKVFLTDNPSPKVPNLISTKKIPSKSRHKFHNIPTNESNHSPRGNQQSFQPQPPPPQSQTALPPPMMESSLYQAPRFGTPIPTTMGFNPNPPDYSIKETKPILGGGKRARSSDHDLVEPMEFLFIKIVKARNLPSMDLTGSLDPYIEVKLGNYTGKTKHFEKNQNPVWNEVFAFSKSNQQSNVLEVIVMDKDMVKDDFVGLIRFDLNQIPTRVAPDSPLAPEWYRVNNEKGGEIMLAVWFGTQADEAFSDATYSDALNAVNKSSLRSKVYHSPRLWYLRVNVIEAQDLVIVPDRTRLPNPYVKIRLNNQVVRTKPSHSLNPRWNEEFTLVAAEPFEDLIISIEDRVAPNREETLGEVHIPIGTIDKRIDDNRTVPNRWFSLKTENQRRVRFATTRLHLNVCLEGGYHVLDESTYYSSDFRPSMKELLSHKQPSFGVLELGILRIEGLNLSQEGKKETVDAYCVAKYGTKWVRTRTVTNCLNPRFNEQYTWEVYEPATVITIGVFDNNQINSGNGNKGDGKIGKIRVRISTLEAGRIYSHSYPLLVLRPSGLKKMGELHLAIRFSCSSMFQMLMQYWKPLLPKMHYARPLKVVQQEILRQHAVNLVAARLSRAEPPLRKEVVEYISDSNSHLWSMRKSRANLFRLSSVFSGLLGTGEWFQDICRWKKPVETTAIHIIFLVLVCSPEMILPVMSLCLFMLGVWNYRLRPRQPPHMDTRLSFADNIHPEELNEEFDTFPFSSQDPGIVKMRYERLRSIASRAQTVVGDIAGQGERVQALLSWRDPRATSIFMVLCLVSTVVLYVVPFKVFVLLAGLYIMRPPRFRGKTPPGPINFFRRLPAKTDCML.

In terms of domain architecture, C2 1 spans M1–Y107. A disordered region spans residues P142 to P203. Residues I150–H159 show a composition bias toward basic residues. Over residues I161 to N173 the composition is skewed to polar residues. Positions P179 to M194 are enriched in pro residues. 3 consecutive C2 domains span residues G232–Y352, A384–F507, and Y543–Y669. Residues D265, D271, D318, D320, and D325 each contribute to the Ca(2+) site. Helical transmembrane passes span I803–L823 and T924–M944.

This sequence belongs to the MCTP family. It depends on Ca(2+) as a cofactor. In terms of tissue distribution, expressed in root hairs.

The protein localises to the membrane. It is found in the vesicle. May function as a signaling molecule by regulating the trafficking of other regulators. The polypeptide is Multiple C2 domain and transmembrane region protein 8 (Arabidopsis thaliana (Mouse-ear cress)).